The following is an 80-amino-acid chain: Acyl carrier protein (80 aa).

The 76-residue stretch at 4–79 (EEIFNKIKDL…DAVSYIKSHQ (76 aa)) folds into the Carrier domain. An O-(pantetheine 4'-phosphoryl)serine modification is found at serine 39.

Belongs to the acyl carrier protein (ACP) family. In terms of processing, 4'-phosphopantetheine is transferred from CoA to a specific serine of apo-ACP by AcpS. This modification is essential for activity because fatty acids are bound in thioester linkage to the sulfhydryl of the prosthetic group.

The protein resides in the cytoplasm. The protein operates within lipid metabolism; fatty acid biosynthesis. Functionally, carrier of the growing fatty acid chain in fatty acid biosynthesis. This chain is Acyl carrier protein, found in Lactobacillus acidophilus (strain ATCC 700396 / NCK56 / N2 / NCFM).